A 324-amino-acid polypeptide reads, in one-letter code: 4-hydroxyphenylpyruvate 3-dimethylallyltransferase (324 aa).

Substrate contacts are provided by Arg-160 and Glu-281.

It belongs to the aromatic prenyltransferase family. In terms of assembly, monomer.

It carries out the reaction 3-(4-hydroxyphenyl)pyruvate + dimethylallyl diphosphate = 3-dimethylallyl-4-hydroxyphenylpyruvate + diphosphate. It functions in the pathway antibiotic biosynthesis. Its function is as follows. Magnesium-independent aromatic prenyltransferase that catalyzes the irreversible transfer of a dimethylallyl group to 4-hydroxyphenylpyruvate to produce the ring A structure in the clorobiocin biosynthesis pathway. Clorobiocin is an aminocoumarin family antibiotic. In Streptomyces roseochromogenus subsp. oscitans, this protein is 4-hydroxyphenylpyruvate 3-dimethylallyltransferase.